The following is a 1125-amino-acid chain: Telomerase reverse transcriptase (1125 aa).

Residues 1–234 (MPRAPRCRAV…ARRRRSSARG (234 aa)) are RNA-interacting domain 1. Residues 58 to 199 (VPWDAQPPPA…RQVGGTRAGF (142 aa)) are GQ motif. The segment at 137-141 (WGLLL) is required for regulating specificity for telomeric DNA and for processivity for primer elongation. A disordered region spans residues 186-308 (RRPTRQVGGT…WRLSPSEGEP (123 aa)). Over residues 224-243 (GARRRRSSARGRLPPAKRPR) the composition is skewed to basic residues. Positions 226–244 (RRRRSSARGRLPPAKRPRR) match the Bipartite nuclear localization signal motif. A Phosphoserine; by PKB/AKT1 modification is found at Ser-231. A linker region spans residues 235 to 312 (RLPPAKRPRR…PSEGEPGAGA (78 aa)). 2 stretches are compositionally biased toward basic and acidic residues: residues 244 to 253 (RGLEPGRDLE) and 269 to 279 (DAAEAKSRKGD). The tract at residues 290–531 (GERGVGSASW…VPAAEHRQRE (242 aa)) is required for oligomerization. Residues 313-543 (CAETKRFLYC…LGRFLHWLMG (231 aa)) are RNA-interacting domain 2. The TFLY; involved in RNA binding signature appears at 316–321 (TKRFLY). The tract at residues 364 to 514 (PRRPRRLPAR…MKVQDCAWLR (151 aa)) is QFP motif. The segment at 385–405 (LGNHARSPYGALLRAHCPLPA) is CP motif. Ser-450 carries the post-translational modification Phosphoserine; by DYRK2. The region spanning 598–928 (EVRQHQEARP…CLFPWCGLLL (331 aa)) is the Reverse transcriptase domain. Tyr-700 carries the phosphotyrosine; by SRC-type Tyr-kinases modification. Asp-705, Asp-861, and Asp-862 together coordinate Mg(2+). The tract at residues 907-921 (LGGAAPLQLPAHCLF) is required for oligomerization. The tract at residues 923-927 (WCGLL) is primer grip sequence. Residues 929–1125 (DTRTLEVHGD…LTADFKTILD (197 aa)) are CTE.

It belongs to the reverse transcriptase family. Telomerase subfamily. Catalytic component of the telomerase holoenzyme complex composed of one molecule of TERT, one molecule of WRAP53/TCAB1, two molecules of H/ACA ribonucleoprotein complex subunits DKC1, NOP10, NHP2 and GAR1, and a telomerase RNA template component (TERC). The telomerase holoenzyme complex is associated with TEP1, SMG6/EST1A and POT1. The molecular chaperone HSP90/P23 complex is required for correct assembly and stabilization of the active telomerase. Interacts directly with HSP90A and PTGES3. Interacts with HSPA1A; the interaction occurs in the absence of TERC and dissociates once the complex has formed. Interacts with RAN; the interaction promotes nuclear export of TERT. Interacts with XPO1. Interacts with PTPN11; the interaction retains TERT in the nucleus. Interacts with NCL (via RRM1 and C-terminal RRM4/Arg/Gly-rich domains); the interaction is important for nucleolar localization of TERT. Interacts with SMARCA4 (via the bromodomain); the interaction regulates Wnt-mediated signaling. Interacts with MCRS1 (isoform MCRS2); the interaction inhibits in vitro telomerase activity. Interacts with PIF1; the interaction has no effect on the elongation activity of TERT. Interacts with PML; the interaction recruits TERT to PML bodies and inhibits telomerase activity. Interacts with GNL3L. Interacts with isoform 1 and isoform 2 of NVL. Interacts with DHX36. Interacts with ATF7. Phosphorylation at Tyr-700 under oxidative stress leads to translocation of TERT to the cytoplasm and reduces its antiapoptotic activity. Dephosphorylated by SHP2/PTPN11 leading to nuclear retention. Phosphorylation at Ser-231 by the AKT pathway promotes nuclear location. Phosphorylation at the G2/M phase at Ser-450 by DYRK2 promotes ubiquitination by the EDVP complex and degradation. In terms of processing, ubiquitinated by the EDVP complex, a E3 ligase complex following phosphorylation at Ser-450 by DYRK2. Ubiquitinated leads to proteasomal degradation.

It localises to the nucleus. It is found in the nucleolus. The protein localises to the nucleoplasm. Its subcellular location is the chromosome. The protein resides in the telomere. It localises to the cytoplasm. It is found in the PML body. It catalyses the reaction DNA(n) + a 2'-deoxyribonucleoside 5'-triphosphate = DNA(n+1) + diphosphate. Telomerase is a ribonucleoprotein enzyme essential for the replication of chromosome termini in most eukaryotes. Active in progenitor and cancer cells. Inactive, or very low activity, in normal somatic cells. Catalytic component of the teleromerase holoenzyme complex whose main activity is the elongation of telomeres by acting as a reverse transcriptase that adds simple sequence repeats to chromosome ends by copying a template sequence within the RNA component of the enzyme. Catalyzes the RNA-dependent extension of 3'-chromosomal termini with the 6-nucleotide telomeric repeat unit, 5'-TTAGGG-3'. The catalytic cycle involves primer binding, primer extension and release of product once the template boundary has been reached or nascent product translocation followed by further extension. More active on substrates containing 2 or 3 telomeric repeats. Telomerase activity is regulated by a number of factors including telomerase complex-associated proteins, chaperones and polypeptide modifiers. Modulates Wnt signaling. Plays important roles in aging and antiapoptosis. This chain is Telomerase reverse transcriptase (TERT), found in Bos taurus (Bovine).